A 77-amino-acid chain; its full sequence is Acyl carrier protein (77 aa).

The Carrier domain maps to 1-76 (MSIEERVKKI…SAIDYVTKAN (76 aa)). O-(pantetheine 4'-phosphoryl)serine is present on S36.

The protein belongs to the acyl carrier protein (ACP) family. In terms of processing, 4'-phosphopantetheine is transferred from CoA to a specific serine of apo-ACP by AcpS. This modification is essential for activity because fatty acids are bound in thioester linkage to the sulfhydryl of the prosthetic group.

The protein localises to the cytoplasm. Its pathway is lipid metabolism; fatty acid biosynthesis. Carrier of the growing fatty acid chain in fatty acid biosynthesis. This chain is Acyl carrier protein, found in Actinobacillus pleuropneumoniae serotype 5b (strain L20).